A 245-amino-acid chain; its full sequence is 1-(5-phosphoribosyl)-5-[(5-phosphoribosylamino)methylideneamino] imidazole-4-carboxamide isomerase (245 aa).

Residue aspartate 7 is the Proton acceptor of the active site. Aspartate 129 serves as the catalytic Proton donor.

The protein belongs to the HisA/HisF family.

The protein localises to the cytoplasm. The enzyme catalyses 1-(5-phospho-beta-D-ribosyl)-5-[(5-phospho-beta-D-ribosylamino)methylideneamino]imidazole-4-carboxamide = 5-[(5-phospho-1-deoxy-D-ribulos-1-ylimino)methylamino]-1-(5-phospho-beta-D-ribosyl)imidazole-4-carboxamide. The protein operates within amino-acid biosynthesis; L-histidine biosynthesis; L-histidine from 5-phospho-alpha-D-ribose 1-diphosphate: step 4/9. This chain is 1-(5-phosphoribosyl)-5-[(5-phosphoribosylamino)methylideneamino] imidazole-4-carboxamide isomerase, found in Aliivibrio salmonicida (strain LFI1238) (Vibrio salmonicida (strain LFI1238)).